A 152-amino-acid chain; its full sequence is Transcriptional regulator MraZ (152 aa).

SpoVT-AbrB domains are found at residues 5 to 52 and 81 to 124; these read ATLV…PLPE and ASEC…DEQT.

This sequence belongs to the MraZ family. Forms oligomers.

The protein resides in the cytoplasm. Its subcellular location is the nucleoid. Negatively regulates its own expression and that of the subsequent genes in the proximal part of the division and cell wall (dcw) gene cluster. Acts by binding directly to DNA. May also regulate the expression of genes outside the dcw cluster. In Erwinia tasmaniensis (strain DSM 17950 / CFBP 7177 / CIP 109463 / NCPPB 4357 / Et1/99), this protein is Transcriptional regulator MraZ.